The chain runs to 1283 residues: Peroxisomal ATPase PEX1 (1283 aa).

Residues 346-367 (SKTKQNVLSPEKEKQMSEPLDQ) are disordered. Residue Ser354 is modified to Phosphoserine. Residues 355–367 (PEKEKQMSEPLDQ) show a composition bias toward basic and acidic residues. ATP contacts are provided by residues 599-606 (GGKGSGKS) and 881-888 (GPPGTGKT). Phosphoserine occurs at positions 1181, 1209, and 1211. The disordered stretch occupies residues 1260–1283 (FQNPKRRKNQSGTMFRPGQKVTLA).

This sequence belongs to the AAA ATPase family. Homooligomer; homooligomerizes in the cytosol, interaction with PEX6 promotes dissociation of the homooligomer. Interacts with PEX6; forming the PEX1-PEX6 AAA ATPase complex, which is composed of a heterohexamer formed by a trimer of PEX1-PEX6 dimers. Interacts indirectly with PEX26, via its interaction with PEX6.

It localises to the cytoplasm. The protein resides in the cytosol. It is found in the peroxisome membrane. The enzyme catalyses ATP + H2O = ADP + phosphate + H(+). In terms of biological role, component of the PEX1-PEX6 AAA ATPase complex, a protein dislocase complex that mediates the ATP-dependent extraction of the PEX5 receptor from peroxisomal membranes, an essential step for PEX5 recycling. Specifically recognizes PEX5 monoubiquitinated at 'Cys-11', and pulls it out of the peroxisome lumen through the PEX2-PEX10-PEX12 retrotranslocation channel. Extraction by the PEX1-PEX6 AAA ATPase complex is accompanied by unfolding of the TPR repeats and release of bound cargo from PEX5. The protein is Peroxisomal ATPase PEX1 of Homo sapiens (Human).